The primary structure comprises 939 residues: Translation initiation factor IF-2 (939 aa).

Positions 57–274 are disordered; that stretch reads RLKPAAPAAP…APTKKNEQKI (218 aa). Basic and acidic residues-rich tracts occupy residues 83–122 and 129–138; these read MEPKEEPQKEVKESVKEAPESLPESPKEEAFEAEIPKESV and LEQEPPKEEL. Composition is skewed to polar residues over residues 146-158 and 170-180; these read ESASETLSDSNPL and VATTLATQTDA. The span at 208-227 shows a compositional bias: basic and acidic residues; the sequence is KRSEEPAPKADRPSLEEART. Positions 252–262 are enriched in basic residues; the sequence is ARKKKKEKKKP. Positions 438–607 constitute a tr-type G domain; the sequence is ERPPVVTIMG…LVQSELLELK (170 aa). Residues 447–454 form a G1 region; the sequence is GHVDHGKT. 447 to 454 is a GTP binding site; the sequence is GHVDHGKT. The G2 stretch occupies residues 472–476; sequence GITQH. Residues 493–496 are G3; sequence DTPG. Residues 493–497 and 547–550 each bind GTP; these read DTPGH and NKVD. Positions 547 to 550 are G4; it reads NKVD. The G5 stretch occupies residues 583–585; it reads SAK.

This sequence belongs to the TRAFAC class translation factor GTPase superfamily. Classic translation factor GTPase family. IF-2 subfamily.

It localises to the cytoplasm. Functionally, one of the essential components for the initiation of protein synthesis. Protects formylmethionyl-tRNA from spontaneous hydrolysis and promotes its binding to the 30S ribosomal subunits. Also involved in the hydrolysis of GTP during the formation of the 70S ribosomal complex. This Wolinella succinogenes (strain ATCC 29543 / DSM 1740 / CCUG 13145 / JCM 31913 / LMG 7466 / NCTC 11488 / FDC 602W) (Vibrio succinogenes) protein is Translation initiation factor IF-2.